The primary structure comprises 153 residues: Glutamyl-tRNA(Gln) amidotransferase subunit C, mitochondrial (153 aa).

The segment at 31–55 (HPTKVPQQPEPNAFPDLDNNTDDDP) is disordered.

It belongs to the GatC family. In terms of assembly, subunit of the heterotrimeric GatCAB amidotransferase (AdT) complex, composed of A, B and C subunits.

The protein resides in the mitochondrion. The enzyme catalyses L-glutamyl-tRNA(Gln) + L-glutamine + ATP + H2O = L-glutaminyl-tRNA(Gln) + L-glutamate + ADP + phosphate + H(+). Its function is as follows. Allows the formation of correctly charged Gln-tRNA(Gln) through the transamidation of misacylated Glu-tRNA(Gln) in the mitochondria. The reaction takes place in the presence of glutamine and ATP through an activated gamma-phospho-Glu-tRNA(Gln). In Drosophila willistoni (Fruit fly), this protein is Glutamyl-tRNA(Gln) amidotransferase subunit C, mitochondrial.